Reading from the N-terminus, the 315-residue chain is Prephenate dehydratase (315 aa).

The region spanning 7–190 is the Prephenate dehydratase domain; the sequence is VVAYLGPAGT…ARTRFVAVQA (184 aa). In terms of domain architecture, ACT spans 204 to 283; sequence SVIFSLPNVP…LVFVGSWPSN (80 aa).

The catalysed reaction is prephenate + H(+) = 3-phenylpyruvate + CO2 + H2O. It functions in the pathway amino-acid biosynthesis; L-phenylalanine biosynthesis; phenylpyruvate from prephenate: step 1/1. This Corynebacterium glutamicum (strain ATCC 13032 / DSM 20300 / JCM 1318 / BCRC 11384 / CCUG 27702 / LMG 3730 / NBRC 12168 / NCIMB 10025 / NRRL B-2784 / 534) protein is Prephenate dehydratase (pheA).